The primary structure comprises 123 residues: Large ribosomal subunit protein eL8 (123 aa).

This sequence belongs to the eukaryotic ribosomal protein eL8 family. In terms of assembly, part of the 50S ribosomal subunit. Probably part of the RNase P complex.

The protein resides in the cytoplasm. Functionally, multifunctional RNA-binding protein that recognizes the K-turn motif in ribosomal RNA, the RNA component of RNase P, box H/ACA, box C/D and box C'/D' sRNAs. The sequence is that of Large ribosomal subunit protein eL8 from Thermococcus gammatolerans (strain DSM 15229 / JCM 11827 / EJ3).